The sequence spans 284 residues: tRNA-splicing endonuclease (284 aa).

Catalysis depends on residues tyrosine 222, histidine 229, and lysine 257.

The protein belongs to the tRNA-intron endonuclease family. Archaeal long subfamily. As to quaternary structure, homodimer.

It catalyses the reaction pretRNA = a 3'-half-tRNA molecule with a 5'-OH end + a 5'-half-tRNA molecule with a 2',3'-cyclic phosphate end + an intron with a 2',3'-cyclic phosphate and a 5'-hydroxyl terminus.. Functionally, endonuclease that removes tRNA introns. Cleaves pre-tRNA at the 5'- and 3'-splice sites to release the intron. The products are an intron and two tRNA half-molecules bearing 2',3' cyclic phosphate and 5'-OH termini. Recognizes a pseudosymmetric substrate in which 2 bulged loops of 3 bases are separated by a stem of 4 bp. The protein is tRNA-splicing endonuclease of Picrophilus torridus (strain ATCC 700027 / DSM 9790 / JCM 10055 / NBRC 100828 / KAW 2/3).